The primary structure comprises 419 residues: Glutamate dehydrogenase (419 aa).

Residue lysine 105 is part of the active site. 219-225 is a binding site for NAD(+); it reads GYGNAGY.

Belongs to the Glu/Leu/Phe/Val dehydrogenases family. Homohexamer.

It catalyses the reaction L-glutamate + NAD(+) + H2O = 2-oxoglutarate + NH4(+) + NADH + H(+). It carries out the reaction L-glutamate + NADP(+) + H2O = 2-oxoglutarate + NH4(+) + NADPH + H(+). This is Glutamate dehydrogenase (gdhA) from Thermococcus profundus.